The sequence spans 407 residues: Patatin-like protein 2 (407 aa).

Residues 22 to 228 enclose the PNPLA domain; it reads LSIDGGGIRG…AANNPALLAI (207 aa). The short motif at 26 to 31 is the GXGXXG element; sequence GGGIRG. Residues 64–68 carry the GXSXG motif; it reads GTSTG. Ser66 acts as the Nucleophile in catalysis. Asp215 functions as the Proton acceptor in the catalytic mechanism. The DGA/G motif lies at 215-217; that stretch reads DGG. Position 398 is a phosphoserine (Ser398).

This sequence belongs to the patatin family. As to expression, expressed specifically in roots.

It localises to the cytoplasm. In terms of biological role, possesses non-specific lipolytic acyl hydrolase (LAH) activity. Catalyzes the hydrolysis of the galactolipids monogalactosyldiacylglycerol (MGDG) and digalactosyldiacylglycerol (DGDG), and less efficiently the phoshpolipids phosphatidylcholine (PC), phosphatidylethanolamine (PE), phosphatidylglycerol (PG), phosphatidic acid (PA), phosphatidylserine (PS) and phosphatidylinositol (PI). Favors the release of fatty acid at the sn-1 position for PC or PE and the sn-2 position for PG, PA, PS and PI. Negatively affects disease resistance to the necrotic fungal pathogen Botrytis cinerea and the avirulent bacteria Pseudomonas syringae by promoting cell death and reducing the efficiency of the hypersensitive response, respectively. However, PLP2 contributes to resistance to cucumber mosaic virus (CMV), an obligate parasite inducing hypersensitive response. May negatively regulate oxylipin production, possibly via participating in membrane repair that includes removal of oxidatively modified lipids. The sequence is that of Patatin-like protein 2 (PLP2) from Arabidopsis thaliana (Mouse-ear cress).